Here is a 142-residue protein sequence, read N- to C-terminus: Large ribosomal subunit protein uL11 (142 aa).

Belongs to the universal ribosomal protein uL11 family. As to quaternary structure, part of the ribosomal stalk of the 50S ribosomal subunit. Interacts with L10 and the large rRNA to form the base of the stalk. L10 forms an elongated spine to which L12 dimers bind in a sequential fashion forming a multimeric L10(L12)X complex. Post-translationally, one or more lysine residues are methylated.

Forms part of the ribosomal stalk which helps the ribosome interact with GTP-bound translation factors. The polypeptide is Large ribosomal subunit protein uL11 (Shewanella halifaxensis (strain HAW-EB4)).